A 129-amino-acid polypeptide reads, in one-letter code: Large ribosomal subunit protein bL17 (129 aa).

It belongs to the bacterial ribosomal protein bL17 family. In terms of assembly, part of the 50S ribosomal subunit. Contacts protein L32.

The protein is Large ribosomal subunit protein bL17 of Polynucleobacter asymbioticus (strain DSM 18221 / CIP 109841 / QLW-P1DMWA-1) (Polynucleobacter necessarius subsp. asymbioticus).